Reading from the N-terminus, the 578-residue chain is Putative multidrug export ATP-binding/permease protein SAB1799c (578 aa).

At 1 to 15 (MIKRYLQFVKPYKYR) the chain is on the cytoplasmic side. A helical membrane pass occupies residues 16–36 (IFATIIVGIIKFGIPMLIPLL). The region spanning 16-306 (IFATIIVGII…LVASFTTLTQ (291 aa)) is the ABC transmembrane type-1 domain. The Extracellular portion of the chain corresponds to 37–59 (IKYAIDGVINNHALTTDEKVHHL). A helical membrane pass occupies residues 60 to 80 (TIAIGIALFIFVIVRPPIEFI). The Cytoplasmic segment spans residues 81 to 138 (RQYLAQWTSNKILYDIRKKLYNHLQALSARFYANNQVGQVISRVINDVEQTKDFILTG). The chain crosses the membrane as a helical span at residues 139 to 159 (LMNIWLDCITIIIALSIMFFL). The Extracellular portion of the chain corresponds to 160-162 (DVK). The chain crosses the membrane as a helical span at residues 163 to 183 (LTLAALFIFPFYILTVYVFFG). The Cytoplasmic portion of the chain corresponds to 184-242 (RLRKLTRERSQALAEVQGFLHERVQGISVVKSFAIEDNEAKNFDKKNANFLTRALKHTR). The helical transmembrane segment at 243–262 (WNAYSFATINTVTDIGPIIV) threads the bilayer. Residues 263 to 267 (IGVGA) are Extracellular-facing. A helical membrane pass occupies residues 268 to 287 (YLAISGSITVGTLAAFVGYL). The Cytoplasmic portion of the chain corresponds to 288–578 (ELLFGPLRRL…YEHLYSIQNL (291 aa)). The ABC transporter domain maps to 340–575 (IDIYHVNFQY…QGAYEHLYSI (236 aa)). 374–381 (GMSGGGKS) serves as a coordination point for ATP.

The protein belongs to the ABC transporter superfamily. Homodimer.

It localises to the cell membrane. Its function is as follows. May be involved in multidrug export. Transmembrane domains (TMD) form a pore in the cell membrane and the ATP-binding domain (NBD) is responsible for energy generation. The protein is Putative multidrug export ATP-binding/permease protein SAB1799c of Staphylococcus aureus (strain bovine RF122 / ET3-1).